We begin with the raw amino-acid sequence, 116 residues long: Cocaine- and amphetamine-regulated transcript protein (116 aa).

The signal sequence occupies residues Met1–Ala27. Tyr41 is modified (phosphotyrosine). Ser48 bears the Phosphoserine mark. Cystine bridges form between Cys82–Cys100, Cys88–Cys108, and Cys102–Cys115.

Belongs to the CART family.

It localises to the secreted. In terms of biological role, satiety factor closely associated with the actions of leptin and neuropeptide y; this anorectic peptide inhibits both normal and starvation-induced feeding and completely blocks the feeding response induced by neuropeptide Y and regulated by leptin in the hypothalamus. The polypeptide is Cocaine- and amphetamine-regulated transcript protein (CARTPT) (Bos taurus (Bovine)).